The following is a 106-amino-acid chain: Minor capsid protein VP2 (106 aa).

It belongs to the vesivirus VP2 protein family. As to quaternary structure, homooligomer. The portal-like structure consists in 12 copies of VP2. Interacts with capsid protein VP1.

The protein localises to the virion. Its subcellular location is the host cytoplasm. In terms of biological role, minor structural protein that forms a portal-like structure at a unique three-fold axis of symmetry, following binding to the host receptor. The virion attaches to feline junctional adhesion molecule A (F11R). Once attached, the virion is endocytosed. Acidification of the endosome induces conformational change of capsid protein thereby injecting virus genomic RNA into host cytoplasm. The channel formed by VP2 may allow the delivery of the viral genome through the host endosomal membrane. The sequence is that of Minor capsid protein VP2 from Feline calicivirus (strain CFI/68 FIV) (FCV).